The following is a 174-amino-acid chain: Solute carrier family 2, facilitated glucose transporter member 4 (174 aa).

The Cytoplasmic portion of the chain corresponds to 1–19 (QQIGSEDGEPPQQRVTGTL). The segment at 2 to 8 (QIGSEDG) is interaction with SRFBP1. Ser5 carries the phosphoserine modification. Residues 20–40 (VLAVFSAVLGSLQFGYNIGVI) traverse the membrane as a helical segment. Over 41 to 76 (NAPQKVIEQSYNETWLGRQGPNGPGSIPPGTLTTLW) the chain is Extracellular. Asn52 is a glycosylation site (N-linked (GlcNAc...) asparagine). A helical transmembrane segment spans residues 77 to 97 (ALSVAIFSVGGMFSSFLLGII). The Cytoplasmic portion of the chain corresponds to 98-114 (SQWLGRKKAMLFNNTLA). The helical transmembrane segment at 115 to 135 (VLAGALMGLAKAAASYEMLIL) threads the bilayer. The Extracellular segment spans residues 136–137 (GR). A helical membrane pass occupies residues 138–158 (FLIGAYSGLASGLVPMYVGEI). Residues 159–166 (APTHLRGA) are Cytoplasmic-facing. Residues 167–174 (LGTLNQLA) form a helical membrane-spanning segment.

Belongs to the major facilitator superfamily. Sugar transporter (TC 2.A.1.1) family. Glucose transporter subfamily. Binds to DAXX. Interacts via its N-terminus with SRFBP1. Interacts with NDUFA9. Interacts with TRARG1; the interaction is required for proper SLC2A4 recycling after insulin stimulation. Sumoylated. In terms of processing, palmitoylated. Palmitoylation by ZDHHC7 controls the insulin-dependent translocation of GLUT4 to the plasma membrane.

The protein resides in the cell membrane. It localises to the endomembrane system. It is found in the cytoplasm. Its subcellular location is the perinuclear region. The enzyme catalyses D-glucose(out) = D-glucose(in). In terms of biological role, insulin-regulated facilitative glucose transporter, which plays a key role in removal of glucose from circulation. Response to insulin is regulated by its intracellular localization: in the absence of insulin, it is efficiently retained intracellularly within storage compartments in muscle and fat cells. Upon insulin stimulation, translocates from these compartments to the cell surface where it transports glucose from the extracellular milieu into the cell. In Sus scrofa (Pig), this protein is Solute carrier family 2, facilitated glucose transporter member 4.